Here is a 457-residue protein sequence, read N- to C-terminus: Adenylosuccinate synthetase isozyme 2 (457 aa).

GTP is bound by residues G40–K46 and G68–T70. D41 (proton acceptor) is an active-site residue. Residues D41 and G68 each contribute to the Mg(2+) site. D41 contributes to the substrate binding site. IMP-binding positions include D41 to K44, N66 to H69, T163, R177, N256, T271, and R335. The active-site Proton donor is H69. V331 to R337 serves as a coordination point for substrate. GTP is bound by residues R337, K363–D365, and G445–K448.

This sequence belongs to the adenylosuccinate synthetase family. In terms of assembly, homodimer. It depends on Mg(2+) as a cofactor.

The protein resides in the cytoplasm. The protein localises to the mitochondrion. It catalyses the reaction IMP + L-aspartate + GTP = N(6)-(1,2-dicarboxyethyl)-AMP + GDP + phosphate + 2 H(+). The protein operates within purine metabolism; AMP biosynthesis via de novo pathway; AMP from IMP: step 1/2. Inhibited competitively by AMP and IMP and non-competitively by fructose 1,6-bisphosphate. Its function is as follows. Plays an important role in the de novo pathway and in the salvage pathway of purine nucleotide biosynthesis. Catalyzes the first committed step in the biosynthesis of AMP from IMP. This chain is Adenylosuccinate synthetase isozyme 2 (adss2), found in Xenopus laevis (African clawed frog).